Reading from the N-terminus, the 1523-residue chain is Rho GTPase-activating protein gacHH (1523 aa).

3 Kelch repeats span residues 30–76 (DIVI…YGHS), 83–133 (KMFV…LIYD), and 135–184 (YILI…DISP). Polar residues-rich tracts occupy residues 161 to 173 (NSWT…SSTG) and 184 to 194 (PRSSTTTPTHQ). Residues 161-256 (NSWTKPSSNS…GGSPMTTPPT (96 aa)) form a disordered region. The span at 195 to 211 (SVNGSNSNSSSSSRVRS) shows a compositional bias: low complexity. Residues 212–221 (ATISSHNNSP) show a composition bias toward polar residues. Positions 227–244 (NNNNNNNNNSNNSNNSNN) are enriched in low complexity. 3 Kelch repeats span residues 335–384 (KAFI…AIGS), 386–441 (LFIF…PISS), and 443–496 (ILII…PITS). Disordered stretches follow at residues 510-569 (LPHL…DNIN), 609-631 (QSID…VSND), and 647-671 (NKNN…NSGS). Gly residues predominate over residues 615 to 626 (GGSGGGSGGGNG). Positions 690–729 (CIKKYNSLKDSYLELKQKYQEEREKRLELEKELERYRLSS) form a coiled coil. Positions 748–786 (NINSNNSTTTTTTTTTTTTTPIPLSTSNNNNNNNNNSTL) are disordered. The stretch at 812–840 (YEKRVKWKENTEKEANQQLEVIKSKIDLF) forms a coiled coil. Disordered regions lie at residues 861–881 (SENI…QNPQ), 905–927 (LTPR…PIPL), 963–991 (TPQK…SKST), 1006–1096 (SGHF…RLGK), and 1143–1194 (NGAN…SERI). Over residues 870–881 (QQQQQQQQQNPQ) the composition is skewed to low complexity. Basic and acidic residues predominate over residues 905–915 (LTPRKSRENSV). Composition is skewed to low complexity over residues 971–981 (PQQQQQQQPPQ), 1012–1030 (SSSN…FSNN), 1043–1079 (QHQQ…LQTQ), and 1143–1153 (NGANNLGGLVL). Positions 1151–1228 (LVLTSDKEKE…KKHKKIKGLF (78 aa)) form a coiled coil. Positions 1155-1194 (SDKEKEKLEKEREKSERIEREKQEKEREKLEKEREKSERI) are enriched in basic and acidic residues. Positions 1233–1411 (SNKESLPFRR…TFIEDFHYIF (179 aa)) constitute a Rho-GAP domain. A disordered region spans residues 1425-1482 (DDDYDSSSFGSNNTPSSHSPHSSSPTLNPAVTTTTTTTTTTNTTTTTNTTTTPTSATI). Low complexity predominate over residues 1430 to 1476 (SSSFGSNNTPSSHSPHSSSPTLNPAVTTTTTTTTTTNTTTTTNTTTT).

It localises to the cytoplasm. In terms of biological role, rho GTPase-activating protein involved in the signal transduction pathway. This Dictyostelium discoideum (Social amoeba) protein is Rho GTPase-activating protein gacHH (gacHH).